A 944-amino-acid polypeptide reads, in one-letter code: UvrABC system protein A (944 aa).

The region spanning 1 to 242 (MSKVDFLHIK…GKGIVKVENV (242 aa)) is the ABC transporter 1 domain. Residue 34-41 (GLSGSGKS) participates in ATP binding. A C4-type; degenerate zinc finger spans residues 256 to 283 (CPKGDFEMPKIETRLFSFNSPYGMCQNC). ABC transporter domains are found at residues 359–597 (EEID…KYLS) and 610–935 (SGSG…EKSY). 643-650 (GVSGSGKS) provides a ligand contact to ATP. The C4-type zinc finger occupies 744–770 (CEKCSGDGSIKIEMFFLPNVYITCDHC).

This sequence belongs to the ABC transporter superfamily. UvrA family. As to quaternary structure, forms a heterotetramer with UvrB during the search for lesions.

The protein resides in the cytoplasm. Functionally, the UvrABC repair system catalyzes the recognition and processing of DNA lesions. UvrA is an ATPase and a DNA-binding protein. A damage recognition complex composed of 2 UvrA and 2 UvrB subunits scans DNA for abnormalities. When the presence of a lesion has been verified by UvrB, the UvrA molecules dissociate. The sequence is that of UvrABC system protein A from Mycoplasmopsis pulmonis (strain UAB CTIP) (Mycoplasma pulmonis).